Reading from the N-terminus, the 1058-residue chain is Carbamoyl phosphate synthase large chain (1058 aa).

Positions 1 to 401 are carboxyphosphate synthetic domain; that stretch reads MPKRKDIQKI…SLLKACRSLE (401 aa). 12 residues coordinate ATP: arginine 129, arginine 169, glycine 175, glycine 176, arginine 208, isoleucine 210, glutamate 215, glycine 241, isoleucine 242, histidine 243, glutamine 284, and glutamate 298. The region spanning 133–327 is the ATP-grasp 1 domain; sequence KQLMQELDQP…IAKLAAKIAV (195 aa). Positions 284, 298, and 300 each coordinate Mg(2+). Residues glutamine 284, glutamate 298, and asparagine 300 each coordinate Mn(2+). The segment at 402–546 is oligomerization domain; it reads IGVCHNEMTS…YSTYELENES (145 aa). The interval 547-929 is carbamoyl phosphate synthetic domain; sequence VQSNKESILV…ALYKAFEANN (383 aa). An ATP-grasp 2 domain is found at 671 to 861; it reads EKALKELGIP…MAQIATKLIL (191 aa). ATP is bound by residues arginine 707, serine 746, isoleucine 748, glutamate 752, glycine 777, valine 778, histidine 779, serine 780, glutamine 820, and glutamate 832. Residues glutamine 820, glutamate 832, and asparagine 834 each coordinate Mg(2+). Mn(2+)-binding residues include glutamine 820, glutamate 832, and asparagine 834. Positions 930 to 1058 constitute an MGS-like domain; sequence SHLSEFGQIV…ESRCFNIEAI (129 aa). The interval 930–1058 is allosteric domain; it reads SHLSEFGQIV…ESRCFNIEAI (129 aa).

This sequence belongs to the CarB family. Composed of two chains; the small (or glutamine) chain promotes the hydrolysis of glutamine to ammonia, which is used by the large (or ammonia) chain to synthesize carbamoyl phosphate. Tetramer of heterodimers (alpha,beta)4. Requires Mg(2+) as cofactor. The cofactor is Mn(2+).

It catalyses the reaction hydrogencarbonate + L-glutamine + 2 ATP + H2O = carbamoyl phosphate + L-glutamate + 2 ADP + phosphate + 2 H(+). The enzyme catalyses hydrogencarbonate + NH4(+) + 2 ATP = carbamoyl phosphate + 2 ADP + phosphate + 2 H(+). Its pathway is amino-acid biosynthesis; L-arginine biosynthesis; carbamoyl phosphate from bicarbonate: step 1/1. The protein operates within pyrimidine metabolism; UMP biosynthesis via de novo pathway; (S)-dihydroorotate from bicarbonate: step 1/3. Large subunit of the glutamine-dependent carbamoyl phosphate synthetase (CPSase). CPSase catalyzes the formation of carbamoyl phosphate from the ammonia moiety of glutamine, carbonate, and phosphate donated by ATP, constituting the first step of 2 biosynthetic pathways, one leading to arginine and/or urea and the other to pyrimidine nucleotides. The large subunit (synthetase) binds the substrates ammonia (free or transferred from glutamine from the small subunit), hydrogencarbonate and ATP and carries out an ATP-coupled ligase reaction, activating hydrogencarbonate by forming carboxy phosphate which reacts with ammonia to form carbamoyl phosphate. The sequence is that of Carbamoyl phosphate synthase large chain from Streptococcus pyogenes serotype M1.